Reading from the N-terminus, the 198-residue chain is Recombination protein RecR (198 aa).

Residues 57 to 72 (CAMCNTFTESAVCETC) form a C4-type zinc finger. The Toprim domain maps to 80–175 (ALLCVVETPG…KVSRLARGVP (96 aa)).

It belongs to the RecR family.

May play a role in DNA repair. It seems to be involved in an RecBC-independent recombinational process of DNA repair. It may act with RecF and RecO. In Herminiimonas arsenicoxydans, this protein is Recombination protein RecR.